The primary structure comprises 525 residues: MNDFWQHCSALLERELTPQQYVTWIKPLAPVAFDASANTLSIAAPNRFKLDWVKSQFSGRISDLARDFWNAPIEVQFVLDPKAGMRSAAAHAAPAAQRAPLTPNGPAATVAAIAANLAANAGAAPSAPADVPMTASAAAAHHLNADDADIDLPSLPAHEAAAGRRTWRPGPGAAPANGGEADSMYERSKLNPVLTFDNFVTGKANQLARAAAIQVADNPGISYNPLFLYGGVGLGKTHLIHAIGNQLLLDKAGARIRYIHAEQYVSDVVKAYQRKAFDDFKRYYHSLDLLLIDDIQFFSGKSRTQEEFFYAFEALVANKAQVIITSDTYPKEISGIDDRLISRFDSGLTVAIEPPELEMRVAILMRKAQSEGVNLSEDVAFFVAKHLRSNVRELEGALRKILAYSKFHGREISIELTKEALKDLLTVQNRQISVENIQKTVADFYNIKVADMYSKKRPANIARPRQIAMYLAKELTQKSLPEIGELFGGRDHTTVLHAVRKIADERSKDAQLNHELHVLEQTLKG.

Residues 1 to 71 (MNDFWQHCSA…SDLARDFWNA (71 aa)) form a domain I, interacts with DnaA modulators region. The segment at 71–188 (APIEVQFVLD…GEADSMYERS (118 aa)) is domain II. The interval 160–182 (AAAGRRTWRPGPGAAPANGGEAD) is disordered. The segment covering 169-181 (PGPGAAPANGGEA) has biased composition (low complexity). The interval 189-405 (KLNPVLTFDN…GALRKILAYS (217 aa)) is domain III, AAA+ region. Gly-233, Gly-235, Lys-236, and Thr-237 together coordinate ATP. A domain IV, binds dsDNA region spans residues 406 to 525 (KFHGREISIE…LHVLEQTLKG (120 aa)).

It belongs to the DnaA family. Oligomerizes as a right-handed, spiral filament on DNA at oriC.

The protein localises to the cytoplasm. Plays an essential role in the initiation and regulation of chromosomal replication. ATP-DnaA binds to the origin of replication (oriC) to initiate formation of the DNA replication initiation complex once per cell cycle. Binds the DnaA box (a 9 base pair repeat at the origin) and separates the double-stranded (ds)DNA. Forms a right-handed helical filament on oriC DNA; dsDNA binds to the exterior of the filament while single-stranded (ss)DNA is stabiized in the filament's interior. The ATP-DnaA-oriC complex binds and stabilizes one strand of the AT-rich DNA unwinding element (DUE), permitting loading of DNA polymerase. After initiation quickly degrades to an ADP-DnaA complex that is not apt for DNA replication. Binds acidic phospholipids. This Burkholderia ambifaria (strain ATCC BAA-244 / DSM 16087 / CCUG 44356 / LMG 19182 / AMMD) (Burkholderia cepacia (strain AMMD)) protein is Chromosomal replication initiator protein DnaA.